Consider the following 1197-residue polypeptide: Probable DNA polymerase (1197 aa).

Belongs to the DNA polymerase type-B family.

Its subcellular location is the mitochondrion. It catalyses the reaction DNA(n) + a 2'-deoxyribonucleoside 5'-triphosphate = DNA(n+1) + diphosphate. This Podospora anserina (Pleurage anserina) protein is Probable DNA polymerase.